A 166-amino-acid chain; its full sequence is UPF0336 protein ML1908 (166 aa).

The protein belongs to the UPF0336 family.

The polypeptide is UPF0336 protein ML1908 (Mycobacterium leprae (strain TN)).